Consider the following 315-residue polypeptide: Energy-coupling factor transporter ATP-binding protein EcfA2 (315 aa).

The region spanning 31–275 (IILDNVSYTY…QELLSKIQIE (245 aa)) is the ABC transporter domain. Residue 68–75 (GTTGSGKS) participates in ATP binding.

This sequence belongs to the ABC transporter superfamily. Energy-coupling factor EcfA family. In terms of assembly, forms a stable energy-coupling factor (ECF) transporter complex composed of 2 membrane-embedded substrate-binding proteins (S component), 2 ATP-binding proteins (A component) and 2 transmembrane proteins (T component).

The protein localises to the cell membrane. Functionally, ATP-binding (A) component of a common energy-coupling factor (ECF) ABC-transporter complex. Unlike classic ABC transporters this ECF transporter provides the energy necessary to transport a number of different substrates. In Mesoplasma florum (strain ATCC 33453 / NBRC 100688 / NCTC 11704 / L1) (Acholeplasma florum), this protein is Energy-coupling factor transporter ATP-binding protein EcfA2.